Reading from the N-terminus, the 710-residue chain is TRP-like ion channel pkd2 (710 aa).

The signal sequence occupies residues 1–23 (MRLWRSPLLLLVVVVELFSWADA). A run of 9 helical transmembrane segments spans residues 173–193 (WVMCMVIGIPLLIFLLISPVL), 197–217 (ALWEIVETMITLFQFAQIQAL), 322–342 (FFATGFSFFIILLFFSLLVAM), 376–396 (FFYRVIFVGFTQMSVLSMWEI), 404–424 (LAFLSMYVIVDMAVLLCYAFV), 466–486 (FFYFTFPLLLITLVRSMFIGF), 492–512 (KVQGCAMFGISVVVFALMVIL), 525–545 (IGVALMNLISGSFILVMCQAF), and 555–575 (IGIIFFALNAITMLLLILGIF). Residues S599 and S632 each carry the phosphoserine modification. Residues 689–710 (RISENNNNAERRRKPLPNNAFR) form a disordered region.

Belongs to the transient receptor potential (TRP) ion channel family. As to quaternary structure, interacts with rho1.

Its subcellular location is the cell membrane. The protein localises to the golgi apparatus membrane. Its function is as follows. Acts as a key signaling component in the regulation of cell shape and cell wall synthesis through interaction with GTPase Rho1. This Schizosaccharomyces pombe (strain 972 / ATCC 24843) (Fission yeast) protein is TRP-like ion channel pkd2 (pkd2).